The primary structure comprises 54 residues: Ovomucoid (54 aa).

Positions 4-54 (VDCSDYPKPVCSLDYMPLCGSDNTTYNNKCIFCNAVVDSNGTITLSHFGKC) constitute a Kazal-like domain. Cystine bridges form between Cys6–Cys36, Cys14–Cys33, and Cys22–Cys54. N-linked (GlcNAc...) asparagine glycosylation occurs at Asn43.

The protein resides in the secreted. The polypeptide is Ovomucoid (Haemorhous mexicanus (House finch)).